Reading from the N-terminus, the 338-residue chain is Malate dehydrogenase, mitochondrial (338 aa).

The transit peptide at 1 to 24 directs the protein to the mitochondrion; it reads MLSALARPAGAALRRSFSTSAQNN. Residues 31–37 and Asp57 contribute to the NAD(+) site; that span reads GASGGIG. Ser33 is a glycosylation site (O-linked (GlcNAc) serine). Residues Lys78 and Lys91 each carry the N6-acetyllysine; alternate modification. Lys78 and Lys91 each carry N6-succinyllysine; alternate. Positions 104 and 110 each coordinate substrate. Residues Asn117 and 140 to 142 each bind NAD(+); that span reads IAN. Residue Asn142 participates in substrate binding. Lys165 is subject to N6-acetyllysine. Arg176 contacts substrate. At Lys185 the chain carries N6-acetyllysine; alternate. N6-succinyllysine; alternate is present on Lys185. Catalysis depends on His200, which acts as the Proton acceptor. N6-succinyllysine is present on Lys203. N6-acetyllysine; alternate occurs at positions 215 and 239. Residues Lys215 and Lys239 each carry the N6-succinyllysine; alternate modification. At Lys239 the chain carries N6-malonyllysine; alternate. The residue at position 246 (Ser246) is a Phosphoserine. Met251 contributes to the NAD(+) binding site. An N6-succinyllysine modification is found at Lys269. An N6-acetyllysine; alternate mark is found at Lys296, Lys301, and Lys307. An N6-succinyllysine; alternate mark is found at Lys296, Lys301, and Lys307. Lys307 carries the N6-malonyllysine; alternate modification. At Thr309 the chain carries Phosphothreonine. 2 positions are modified to N6-acetyllysine; alternate: Lys314 and Lys324. Residues Lys314 and Lys324 each carry the N6-succinyllysine; alternate modification. Ser326 carries the post-translational modification Phosphoserine. An N6-acetyllysine; alternate mark is found at Lys328, Lys329, and Lys335. Position 328 is an N6-succinyllysine; alternate (Lys328). The residue at position 329 (Lys329) is an N6-malonyllysine; alternate. At Lys335 the chain carries N6-succinyllysine; alternate.

It belongs to the LDH/MDH superfamily. MDH type 1 family. In terms of assembly, homodimer. In terms of processing, acetylation is enhanced after treatment either with trichostin A (TCA) or with nicotinamide (NAM) with the appearance of tri- and tetraacetylations. Glucose also increases acetylation. Acetylation of Lys-239 and Lys-314 is observed in liver mitochondria from fasted mice but not from fed mice.

It is found in the mitochondrion matrix. The catalysed reaction is (S)-malate + NAD(+) = oxaloacetate + NADH + H(+). With respect to regulation, enzyme activity is enhanced by acetylation. This Mus musculus (Mouse) protein is Malate dehydrogenase, mitochondrial (Mdh2).